Consider the following 692-residue polypeptide: Translation initiation factor IF-2 (692 aa).

In terms of domain architecture, tr-type G spans 194 to 363; it reads PRPPIVTVMG…LLVAEMEDLK (170 aa). The tract at residues 203–210 is G1; sequence GHVDHGKT. Residue 203–210 coordinates GTP; it reads GHVDHGKT. The tract at residues 228-232 is G2; that stretch reads GITQH. Positions 249–252 are G3; sequence DTPG. Residues 249–253 and 303–306 contribute to the GTP site; these read DTPGH and NKID. The tract at residues 303 to 306 is G4; sequence NKID. A G5 region spans residues 339–341; sequence SAK.

This sequence belongs to the TRAFAC class translation factor GTPase superfamily. Classic translation factor GTPase family. IF-2 subfamily.

Its subcellular location is the cytoplasm. In terms of biological role, one of the essential components for the initiation of protein synthesis. Protects formylmethionyl-tRNA from spontaneous hydrolysis and promotes its binding to the 30S ribosomal subunits. Also involved in the hydrolysis of GTP during the formation of the 70S ribosomal complex. The chain is Translation initiation factor IF-2 from Thermoanaerobacter sp. (strain X514).